The primary structure comprises 635 residues: Cationic amino acid transporter 2, vacuolar (635 aa).

Topologically, residues 1-48 (MGFLVDTQKEGGGHSWGYVRSLVRRKQVDSANGQSHGHQLARALTVPH) are cytoplasmic. A helical membrane pass occupies residues 49-69 (LVAIGVGATIGAGVYILVGTV). Residues 70-76 (AREHSGP) are Vacuolar-facing. The helical transmembrane segment at 77–97 (SLALSFLIAGIAAGLSAFCYA) threads the bilayer. The Cytoplasmic portion of the chain corresponds to 98-108 (ELSSRCPSAGS). The chain crosses the membrane as a helical span at residues 109–131 (AYHYSYICVGEGVAWIIGWALIL). At 132–171 (EYTIGGSAVARGISPNLALIFGGEDGLPAILARHQIPGLD) the chain is on the vacuolar side. The helical transmembrane segment at 172–192 (IVVDPCAAILVFVVTGLLCMG) threads the bilayer. At 193 to 200 (IKESTFAQ) the chain is on the cytoplasmic side. Residues 201-221 (GIVTAVNVCVLLFVIVAGSYL) traverse the membrane as a helical segment. The Vacuolar portion of the chain corresponds to 222 to 235 (GFKTGWPGYELPTG). The chain crosses the membrane as a helical span at residues 236-256 (FFPFGVDGMFAGSATVFFAFI). Over 257–280 (GFDSVASTAEEVRNPQRDLPIGIG) the chain is Cytoplasmic. The chain crosses the membrane as a helical span at residues 281-301 (LALLLCCSLYMMVSIVIVGLI). Residues 302–324 (PYYAMDPDTPISSAFASHDMQWA) lie on the Vacuolar side of the membrane. Residues 325–345 (VYLITLGAVMALCSALMGALL) traverse the membrane as a helical segment. Over 346-376 (PQPRILMAMARDGLLPSIFSDINKRTQVPVK) the chain is Cytoplasmic. A helical membrane pass occupies residues 377–397 (ATVATGLCAATLAFFMDVSQL). Residue Ala398 is a topological domain, vacuolar. The helical transmembrane segment at 399-419 (GMVSVGTLLAFTMVAISVLIL) threads the bilayer. Residues 420 to 493 (RYVPPDEQPL…CLVLSEETRR (74 aa)) are Cytoplasmic-facing. The chain crosses the membrane as a helical span at residues 494-514 (IVAGWSIMFTCVGAFLLSYAA). At 515 to 524 (SSLSFPGLIR) the chain is on the vacuolar side. A helical membrane pass occupies residues 525–545 (YPLCGVGGCLLLAGLIALSSI). Residues 546-560 (DQDDARHTFGHSGGY) are Cytoplasmic-facing. Residues 561–581 (MCPFVPLLPIICILINMYLLV) traverse the membrane as a helical segment. The Vacuolar portion of the chain corresponds to 582-585 (NLGS). A helical transmembrane segment spans residues 586 to 606 (ATWARVSVWLLIGVIVYVFYG). Residues 607-635 (RKNSSLANAVYVTTAHAEEIYREHEGSLA) lie on the Cytoplasmic side of the membrane.

Belongs to the amino acid-polyamine-organocation (APC) superfamily. Cationic amino acid transporter (CAT) (TC 2.A.3.3) family. In terms of tissue distribution, expressed in roots, stems, flowers, leaves, and siliques.

The protein resides in the vacuole membrane. Functionally, permease involved in the transport of the cationic amino acids. The chain is Cationic amino acid transporter 2, vacuolar (CAT2) from Arabidopsis thaliana (Mouse-ear cress).